A 390-amino-acid chain; its full sequence is Phosphopentomutase (390 aa).

Mn(2+)-binding residues include D11, D283, H288, D324, H325, and H336.

This sequence belongs to the phosphopentomutase family. Mn(2+) serves as cofactor.

It localises to the cytoplasm. The catalysed reaction is 2-deoxy-alpha-D-ribose 1-phosphate = 2-deoxy-D-ribose 5-phosphate. It carries out the reaction alpha-D-ribose 1-phosphate = D-ribose 5-phosphate. Its pathway is carbohydrate degradation; 2-deoxy-D-ribose 1-phosphate degradation; D-glyceraldehyde 3-phosphate and acetaldehyde from 2-deoxy-alpha-D-ribose 1-phosphate: step 1/2. In terms of biological role, isomerase that catalyzes the conversion of deoxy-ribose 1-phosphate (dRib-1-P) and ribose 1-phosphate (Rib-1-P) to deoxy-ribose 5-phosphate (dRib-5-P) and ribose 5-phosphate (Rib-5-P), respectively. This is Phosphopentomutase from Clostridium novyi (strain NT).